The chain runs to 140 residues: ATP synthase epsilon chain (140 aa).

This sequence belongs to the ATPase epsilon chain family. As to quaternary structure, F-type ATPases have 2 components, CF(1) - the catalytic core - and CF(0) - the membrane proton channel. CF(1) has five subunits: alpha(3), beta(3), gamma(1), delta(1), epsilon(1). CF(0) has three main subunits: a, b and c.

It is found in the cell inner membrane. Produces ATP from ADP in the presence of a proton gradient across the membrane. The protein is ATP synthase epsilon chain of Herminiimonas arsenicoxydans.